A 652-amino-acid polypeptide reads, in one-letter code: Threonine--tRNA ligase (652 aa).

The TGS domain maps to 1–63 (MAEISLTFPD…TESGDFQLIT (63 aa)). The interval 246-545 (DHRVIGRDLD…LIEMYKGAFP (300 aa)) is catalytic. Zn(2+)-binding residues include cysteine 340, histidine 391, and histidine 522.

The protein belongs to the class-II aminoacyl-tRNA synthetase family. In terms of assembly, homodimer. Zn(2+) is required as a cofactor.

It localises to the cytoplasm. It catalyses the reaction tRNA(Thr) + L-threonine + ATP = L-threonyl-tRNA(Thr) + AMP + diphosphate + H(+). Functionally, catalyzes the attachment of threonine to tRNA(Thr) in a two-step reaction: L-threonine is first activated by ATP to form Thr-AMP and then transferred to the acceptor end of tRNA(Thr). Also edits incorrectly charged L-seryl-tRNA(Thr). The chain is Threonine--tRNA ligase from Leuconostoc mesenteroides subsp. mesenteroides (strain ATCC 8293 / DSM 20343 / BCRC 11652 / CCM 1803 / JCM 6124 / NCDO 523 / NBRC 100496 / NCIMB 8023 / NCTC 12954 / NRRL B-1118 / 37Y).